A 2587-amino-acid polypeptide reads, in one-letter code: MPSESYPRVNPKVFLFGPQALAFDAKLFTTLQSHLYDSWALDALSDLPIIWESLVKQVPKLQHVEGERLLRELHQGLQTGSLPDSLFPLPNILLSPLVVIVQLTQYLAFVRSGLPGLGDTDEIPQSVMQTSESLGLCTGILSAFAVSCASSIAKVQQYGAVAVRLSMLVGALVDAEEASPDTGSPAMSFSMSWNALESRTSVDEVLAEFPEAYISVFVDEKRATVTAPKESAPALLDKLRLSGAHVTEVALSGRFHWPKHREDAKQLIAFCDHDPRFQFPDASEIVLPTRLSTGGRLHEIALQEILLKPSEWLSLFGLVQSSHIDAGGANFVCFGSERCVPPTMIRKLGPLLIHISDVDLSTSALPSELLRSTSASPFDNLPDDQIAVIGMACHVPGAEDLDEYWRILTSGQSQHTRVPLERFSMKTAFRELEENRKWYGNFLRDYDTFDHKFFKKSAREMSSADPQHRLVLKLAYQAIEQSGYFGASHNSKHVGCYIGIGNNDYERNIACHPANAYSATGNLRSFAAGKVSHYFGWTGPSLTIDTACSSSGVAIHQACRAILHGECTSALAGGVNVLTSPEWFQNLAGASFLSPTGQCKPFDARGDGYCRGEGAGVVFLKRLSSAIADGDQVLGVIASTKVYQNQNCTAITVPNSISLAGLFGDVVEQARLEPQAISVVEAHGTGTPVGDPAEYDAVRRVFGGSIRSDTLSLMSVKGLLGHTEFASGIVSLVKILLMINEGFIPPQASFTSMSPALNAYHEDMINIATQLTPWNVDFRAALINNYGASGSNASMIITQAPKPRSSTSNPSPLSSSATSFPFWLCGIDSQSLRAYATKFRRFIHDNADSVKDLTVRNLSFQISRQSNRNLPRALIFSAASRNELEEKLLDYEQGGRSIAEIEVPPPRPVILCFGGQISTYVGLGKDVYNQATILRSHLDQCNTVCLSLGLGSIYPAIFQRSPILDTVELQTVLFAAQYSCARAWIDSGVKVTAVIGHSFGELTALCIAGAYSLADALRLISGRARLIRDKWGSDKGSMLALEADLAEVTALLSTSNKPDVSIACYNGPRSFTLAGSTESVQFIEELARSNQTFFGMKLKKLNVTNAFHSANVDPLISDLEALGREIQFNEPIIQVEAATETRSSPTRGSHFIAQHLRNPVYFNHAVQRLAEEYPAAIWLEAGSNSTITTMISRALGNSSSPHHFQSVHITSEESLPLLAEATTKLWKEGLNVSFWAHHPMEVSQHSLVILPPYQFEKARHWMDLKEVPEVKSSIDTTVQPPEPPKGLTTFIGFEDQAKQSARFRVNTTCDKFQQLTSANVALNTTAVTPGMLQIEISLDAIMNLQPDFKTYQFQPEVQGVSYHNALIDSNSTDLYLDAIAKDDGGLAWRWRLYGTDLGDRVTEFSSGSIVFLPASDPALKENFERLSRLSGKKRCASLLQGNGADDVLQGRNIYRAFEQVVNYAEPFRRVTKIAGKEDESAGYVSKAYTGETWMDPVLTECFCQVAGIFINLMTDASDLSKRGVYICDGISRWMHYPGLGSMTSAPDAWEVFAVHHHESETKYVSDVFAFDPRDGSLIEAILGISYRLVPMDSMRKLLTRGPQQESHFSTAAVSSKSTPVHAPTPTTTVSSTPSSLNSFQEKTIVKNVAKPPGPDISAKMCEIICNLSGLEPEEIEDDSDLVELGIDSLMAMELVREVDSAFKCTLQNDQLMELTDFASLVSCIRSTLGFDDEESGVGFERDSSVDTEAYILLEPNEPATNINGANGTVSFDHRDGNAVLSMSTLLDAFREIKWDTDDDIVKGQLGTYSKHVMPRSTELCIVYIVDAFEQLGCPIRSAAPGQVLTRVPYHPKHEKFMNMIIYGLLEKDARLIDINGSIITRTAVAPPTASADTLLSKLLHDEPVHAAEHKLAALIGQKFADLITDKEDGLKLIFGNPESREIAADMYSNSPVNTVWIKQLERFFERVLGRLPKDGQPICILEVGGGTGGTTSRIVPLLAKLGVPVKYTMTDISGSLIAAARKRFKKYPFMDFKPLNMESEPDAKFLQSQHIILATNCIHATRNLSVSLKNLHRILRPDGALIMLEMTEQVPWCDFIFGLLEGWWLFEDGRDYVLQPATYWEKVLQSVGYGHVDWTEGELPEARIQRLIIAHASGSRYDRGPKPPLASIPELTLPDISERRARIDAAVHKYTKDFVAPSQILSPAKLPSLSSGQCVLVTGATGSLGAHIVASLVQRPGIHTVVCLNRLSTTEATVRQQNSLQMRGISLDPTSLSKLKVIETDTSKPNLGLSPENYQYLIQNVTEIVHSAWPMSLTRPMRTYEPQFKIARGLIDLAREVAQHRPAPFKFGFQFISSSAVIANYPLLAGTPVVPEQSGTVESVPLTGYAEAKLATERILAETLYRFPDRFHVMAVRIAQITGSTSNGYWNPSEYMPFLIKSSQVLKILPELDGTLSWYPVNDVASVLGELLLSQSTTDLIYHIDNPSRQTWREMIAILARALDLGQKSIVPFGQWVNRVRGFRGSIADNPALQLIDFFEHYFVPMSCGGLVLDTTKSSQHSKTLQNQGPIDEDLMMKYIARWKESGFLNP.

The interval 93–256 is N-terminal acylcarrier protein transacylase domain (SAT); sequence LLSPLVVIVQ…TEVALSGRFH (164 aa). The Nucleophile; for transacylase activity role is filled by cysteine 137. Catalysis depends on histidine 256, which acts as the Proton donor/acceptor; for transacylase activity. Residues 383–799 enclose the Ketosynthase family 3 (KS3) domain; sequence DDQIAVIGMA…GSNASMIITQ (417 aa). Residues cysteine 548, histidine 683, and histidine 722 each act as for beta-ketoacyl synthase activity in the active site. A malonyl-CoA:ACP transacylase (MAT) domain region spans residues 912-1222; sequence CFGGQISTYV…ESLPLLAEAT (311 aa). Positions 1284–1416 are N-terminal hotdog fold; it reads PKGLTTFIGF…GSIVFLPASD (133 aa). The PKS/mFAS DH domain maps to 1284–1595; sequence PKGLTTFIGF…YRLVPMDSMR (312 aa). Positions 1315-1593 are product template (PT) domain; it reads LTSANVALNT…ISYRLVPMDS (279 aa). The tract at residues 1436–1595 is C-terminal hotdog fold; that stretch reads ASLLQGNGAD…YRLVPMDSMR (160 aa). Residues 1609–1635 form a disordered region; it reads STAAVSSKSTPVHAPTPTTTVSSTPSS. Over residues 1617-1635 the composition is skewed to low complexity; it reads STPVHAPTPTTTVSSTPSS. The Carrier domain occupies 1654–1728; it reads PDISAKMCEI…SLVSCIRSTL (75 aa). An O-(pantetheine 4'-phosphoryl)serine modification is found at serine 1688. Residues tyrosine 1947, histidine 2059, and glutamate 2085 each act as for methyltransferase activity in the active site. The methyltransferase (CMeT) domain stretch occupies residues 1952 to 2126; sequence VNTVWIKQLE…ATYWEKVLQS (175 aa). Positions 2208–2452 are NADPH-binding (R) domain; that stretch reads SLSSGQCVLV…KILPELDGTL (245 aa).

Pantetheine 4'-phosphate serves as cofactor.

The catalysed reaction is 3 malonyl-CoA + acetyl-CoA + AH2 + 2 S-adenosyl-L-methionine + H(+) = clavatol + A + 2 S-adenosyl-L-homocysteine + 3 CO2 + 4 CoA + H2O. It participates in secondary metabolite biosynthesis. Non-reducing polyketide synthase; part of the cla gene cluster that produces clavatol and ortho-quinone methide. The clavatol biosynthesis cluster cla and the terrestric acid cluster tra are both involved in the production of peniphenones and penilactones. The non-reducing PKS claF is responsible for the formation of clavatol from successive condensations of 3 malonyl-CoA units, presumably with a simple acetyl-CoA starter unit, and 2 methylation steps. The esterase claE probably collaborates with claF by catalyzing the hydrolysis of ACP-bound acyl intermediates to free the ACP from stalled intermediates. The clavatol oxidase claD then converts clavatol to hydroxyclavatol. Spontaneous dehydration of hydroxyclavatol leads to the accumulation of the highly active ortho-quinone methide. On the other hand, the PKS-NRPS hybrid traA is involved in the formation of crustosic acid, with the help of traB and traD. The polyketide synthase module (PKS) of traA is responsible for the synthesis of the polyketide backbone via the condensation of an acetyl-CoA starter unit with 3 malonyl-CoA units. The downstream nonribosomal peptide synthetase (NRPS) module then amidates the carboxyl end of the polyketide with L-malic acid. Because traA lacks a designated enoylreductase (ER) domain, the required activity is provided the enoyl reductase traG. Crustosic acid undergoes decarboxylation and isomerization to the terrestric acid, catalyzed by the 2-oxoglutarate-dependent dioxygenase traH. Both acids are further converted to the 2 gamma-butyrolactones (R)-5-methyltetronic acid and (S)-5-carboxylmethyltetronic acid, with involvement of the cytochrome P450 monooxygenase claJ. Spontaneous addition of the methide to these gamma-butyrolactones leads to peniphenone D and penilactone D, which undergo again stereospecific attacking by methide to give penilactones A and B. The protein is Clavatol synthase claF of Penicillium crustosum (Blue mold fungus).